Here is a 65-residue protein sequence, read N- to C-terminus: Large ribosomal subunit protein bL32 (65 aa).

Residues 1–19 show a composition bias toward basic residues; that stretch reads MAVQKSRKTPSKRGMRRSH. Residues 1–32 form a disordered region; that stretch reads MAVQKSRKTPSKRGMRRSHNALTNPTLSEDQE.

This sequence belongs to the bacterial ribosomal protein bL32 family.

The protein is Large ribosomal subunit protein bL32 of Ruthia magnifica subsp. Calyptogena magnifica.